Here is a 254-residue protein sequence, read N- to C-terminus: Flavin-dependent thymidylate synthase (254 aa).

The ThyX domain maps to Leu7–Thr237. DUMP is bound by residues Glu92–Arg95, Gln103–Arg107, and His176. FAD-binding positions include Arg95–Arg97 and Gln103. Residues Arg95–Ser105 carry the ThyX motif motif. FAD is bound by residues Asn192 to Arg194 and His198. Residue Arg203 coordinates dUMP. Arg203 (involved in ionization of N3 of dUMP, leading to its activation) is an active-site residue.

Belongs to the thymidylate synthase ThyX family. In terms of assembly, homotetramer. FAD is required as a cofactor.

It carries out the reaction dUMP + (6R)-5,10-methylene-5,6,7,8-tetrahydrofolate + NADPH + H(+) = dTMP + (6S)-5,6,7,8-tetrahydrofolate + NADP(+). The protein operates within pyrimidine metabolism; dTTP biosynthesis. Catalyzes the reductive methylation of 2'-deoxyuridine-5'-monophosphate (dUMP) to 2'-deoxythymidine-5'-monophosphate (dTMP) while utilizing 5,10-methylenetetrahydrofolate (mTHF) as the methyl donor, and NADPH and FADH(2) as the reductant. The sequence is that of Flavin-dependent thymidylate synthase from Mycobacterium leprae (strain Br4923).